Reading from the N-terminus, the 483-residue chain is Altronate oxidoreductase (483 aa).

NAD(+) is bound at residue 18–29 (IIQFGEGNFLRA).

It belongs to the mannitol dehydrogenase family. UxaB subfamily.

It catalyses the reaction D-altronate + NAD(+) = keto-D-tagaturonate + NADH + H(+). It functions in the pathway carbohydrate metabolism; pentose and glucuronate interconversion. This chain is Altronate oxidoreductase, found in Yersinia pestis.